Here is a 1012-residue protein sequence, read N- to C-terminus: Ankyrin repeat- and BTB/POZ domain-containing protein 3-B (1012 aa).

Residues 160-180 form a helical membrane-spanning segment; it reads ILSWTISVNCIAASLSALSMY. 3 ANK repeats span residues 511–540, 557–586, and 595–624; these read QGMT…DINS, RQAT…NVEG, and YTET…DPMI. Residues 831-897 enclose the BTB domain; sequence SDVTFLVEGK…LYCGGTDALH (67 aa).

It localises to the membrane. In Danio rerio (Zebrafish), this protein is Ankyrin repeat- and BTB/POZ domain-containing protein 3-B (abtb3b).